We begin with the raw amino-acid sequence, 92 residues long: Small ribosomal subunit protein uS19 (92 aa).

The protein belongs to the universal ribosomal protein uS19 family.

Protein S19 forms a complex with S13 that binds strongly to the 16S ribosomal RNA. This Bacillus thuringiensis subsp. konkukian (strain 97-27) protein is Small ribosomal subunit protein uS19.